The following is an 804-amino-acid chain: G-type lectin S-receptor-like serine/threonine-protein kinase At1g61490 (804 aa).

Positions 1-24 (MGKKRIVFFACLLLFTVLLRFSYA) are cleaved as a signal peptide. In terms of domain architecture, Bulb-type lectin spans 25-144 (GITTESPLSV…ASGRTLWESF (120 aa)). The Extracellular portion of the chain corresponds to 25–425 (GITTESPLSV…SELGGNKRNK (401 aa)). 6 N-linked (GlcNAc...) asparagine glycosylation sites follow: Asn53, Asn94, Asn117, Asn134, Asn236, and Asn267. The EGF-like domain occupies 278-314 (PANSCDIYGVCGPFGLCIVSVPLKCKCLKGFVPHSTE). Disulfide bonds link Cys282-Cys294 and Cys288-Cys302. Residues Asn320, Asn336, and Asn375 are each glycosylated (N-linked (GlcNAc...) asparagine). Positions 333-415 (CQGNSTGKDV…GEILSIRLAH (83 aa)) constitute a PAN domain. Disulfide bonds link Cys368-Cys389 and Cys372-Cys378. The helical transmembrane segment at 426 to 446 (IIVASTVSLSLFVILTSAAFG) threads the bilayer. Residues 447–804 (FWRYRVKHKA…EMTQSMILGR (358 aa)) lie on the Cytoplasmic side of the membrane. The Protein kinase domain maps to 490-775 (FSLSNKLGQG…DLPSPKQPTF (286 aa)). ATP-binding positions include 496-504 (LGQGGFGSV) and Lys518. Residues Ser524 and Ser539 each carry the phosphoserine modification. The segment at 579 to 596 (RKKLEVDWPKRFDIVQGI) is caM-binding. Asp615 functions as the Proton acceptor in the catalytic mechanism. Phosphoserine occurs at positions 619 and 632. A Phosphothreonine modification is found at Thr649. At Ser692 the chain carries Phosphoserine.

It belongs to the protein kinase superfamily. Ser/Thr protein kinase family.

The protein resides in the cell membrane. It carries out the reaction L-seryl-[protein] + ATP = O-phospho-L-seryl-[protein] + ADP + H(+). It catalyses the reaction L-threonyl-[protein] + ATP = O-phospho-L-threonyl-[protein] + ADP + H(+). In Arabidopsis thaliana (Mouse-ear cress), this protein is G-type lectin S-receptor-like serine/threonine-protein kinase At1g61490.